The following is a 296-amino-acid chain: Light-inducible protein CPRF3 (296 aa).

3 disordered regions span residues 1–27 (MSDG…ITTT), 98–165 (PNLA…GSLE), and 190–223 (RVND…KSDE). The span at 107–117 (VGRKISDEKGR) shows a compositional bias: basic and acidic residues. Residues 145 to 156 (SSSDNDCPSLSS) are compositionally biased toward low complexity. The 64-residue stretch at 196–259 (ELKRQRRKQS…AEVTSENHSI (64 aa)) folds into the bZIP domain. Residues 198-220 (KRQRRKQSNRESARRSRLRKQAK) are basic motif. The leucine-zipper stretch occupies residues 224 to 245 (LQERLDNLSKENRILRKNLQRI).

It belongs to the bZIP family. In terms of assembly, binds DNA as a dimer.

It is found in the nucleus. Binds to the G-box-like motif (5'-ACGTGGC-3') of the chalcone synthase (CHS) gene promoter. G-box and G-box-like motifs are defined in promoters of certain plant genes which are regulated by such diverse stimuli as light-induction or hormone control. This Petroselinum crispum (Parsley) protein is Light-inducible protein CPRF3 (CPRF3).